A 326-amino-acid chain; its full sequence is Tagatose 1,6-diphosphate aldolase 2 (326 aa).

This sequence belongs to the aldolase LacD family.

The enzyme catalyses D-tagatofuranose 1,6-bisphosphate = D-glyceraldehyde 3-phosphate + dihydroxyacetone phosphate. It participates in carbohydrate metabolism; D-tagatose 6-phosphate degradation; D-glyceraldehyde 3-phosphate and glycerone phosphate from D-tagatose 6-phosphate: step 2/2. The chain is Tagatose 1,6-diphosphate aldolase 2 (lacD2) from Streptococcus agalactiae serotype III (strain NEM316).